Here is a 298-residue protein sequence, read N- to C-terminus: Cation-efflux pump FieF (298 aa).

Residues 24 to 44 (LLIKIFAWWYTGSVSILAALV) form a helical membrane-spanning segment. Zn(2+) is bound by residues aspartate 45 and aspartate 49. The next 2 helical transmembrane spans lie at 80 to 100 (SLAA…LTSI) and 112 to 132 (PGVG…LVTF). Residues histidine 151 and aspartate 155 each contribute to the Zn(2+) site. Helical transmembrane passes span 154 to 174 (SDVM…YGWH) and 176 to 196 (ADAL…LRMG).

Belongs to the cation diffusion facilitator (CDF) transporter (TC 2.A.4) family. FieF subfamily. Homodimer.

The protein localises to the cell inner membrane. The enzyme catalyses Zn(2+)(in) + H(+)(out) = Zn(2+)(out) + H(+)(in). It catalyses the reaction Cd(2+)(in) + H(+)(out) = Cd(2+)(out) + H(+)(in). It carries out the reaction Fe(2+)(in) + H(+)(out) = Fe(2+)(out) + H(+)(in). Divalent metal cation transporter which exports Zn(2+), Cd(2+) and possibly Fe(2+). May be involved in zinc and iron detoxification by efflux. This Salmonella typhi protein is Cation-efflux pump FieF.